The sequence spans 65 residues: U12-theraphotoxin-Cg1a (65 aa).

The signal sequence occupies residues 1–21; that stretch reads MKTSVLLFMLGLTFLFDGLAA. A propeptide spanning residues 22–29 is cleaved from the precursor; the sequence is INLQEGER. 3 disulfide bridges follow: cysteine 31–cysteine 45, cysteine 38–cysteine 50, and cysteine 44–cysteine 57.

Belongs to the neurotoxin 10 (Hwtx-1) family. 31 (Jztx-15) subfamily. Expressed by the venom gland.

The protein resides in the secreted. Probable ion channel inhibitor. In Chilobrachys guangxiensis (Chinese earth tiger tarantula), this protein is U12-theraphotoxin-Cg1a.